Here is a 65-residue protein sequence, read N- to C-terminus: Non-structural protein 5a (65 aa).

In Avian infectious bronchitis virus (strain Beaudette) (IBV), this protein is Non-structural protein 5a.